A 156-amino-acid chain; its full sequence is SsrA-binding protein (156 aa).

It belongs to the SmpB family.

The protein resides in the cytoplasm. Its function is as follows. Required for rescue of stalled ribosomes mediated by trans-translation. Binds to transfer-messenger RNA (tmRNA), required for stable association of tmRNA with ribosomes. tmRNA and SmpB together mimic tRNA shape, replacing the anticodon stem-loop with SmpB. tmRNA is encoded by the ssrA gene; the 2 termini fold to resemble tRNA(Ala) and it encodes a 'tag peptide', a short internal open reading frame. During trans-translation Ala-aminoacylated tmRNA acts like a tRNA, entering the A-site of stalled ribosomes, displacing the stalled mRNA. The ribosome then switches to translate the ORF on the tmRNA; the nascent peptide is terminated with the 'tag peptide' encoded by the tmRNA and targeted for degradation. The ribosome is freed to recommence translation, which seems to be the essential function of trans-translation. This is SsrA-binding protein from Maricaulis maris (strain MCS10) (Caulobacter maris).